Here is a 427-residue protein sequence, read N- to C-terminus: Trigger factor (427 aa).

The PPIase FKBP-type domain maps to 163–248; that stretch reads GDTVVIDFVG…IHEVKEKEVP (86 aa).

It belongs to the FKBP-type PPIase family. Tig subfamily.

The protein resides in the cytoplasm. It catalyses the reaction [protein]-peptidylproline (omega=180) = [protein]-peptidylproline (omega=0). Its function is as follows. Involved in protein export. Acts as a chaperone by maintaining the newly synthesized protein in an open conformation. Functions as a peptidyl-prolyl cis-trans isomerase. The chain is Trigger factor from Streptococcus sanguinis (strain SK36).